The sequence spans 291 residues: Protease HtpX (291 aa).

The next 2 membrane-spanning stretches (helical) occupy residues Ile-4 to Phe-24 and Ile-32 to Leu-52. His-139 is a Zn(2+) binding site. Glu-140 is an active-site residue. His-143 contacts Zn(2+). 2 helical membrane passes run Ile-158 to Leu-178 and Trp-192 to Ile-212. Glu-221 contributes to the Zn(2+) binding site.

It belongs to the peptidase M48B family. The cofactor is Zn(2+).

The protein resides in the cell membrane. The chain is Protease HtpX from Buchnera aphidicola subsp. Baizongia pistaciae (strain Bp).